Here is a 305-residue protein sequence, read N- to C-terminus: MSMSTLRHFLWLGALLLATIQVSALPTAQDLICNGHPEYCDRRYSELSFVGAHNSPFVGPLLQHNQDISVTEQLDFGIRFLQGQTHKNDDGVFSMCHTSCILEDAGSVSSYLQTVKTWLDSHPNEVVTLLITNGDGLDIKEFDDAFNAVNGIKDYTFAPKSKLALGDWPTLRELITTGKRLIVFVDSKADTNRFPYLLDEFSYYFETPFSTTDENFPQCKLDRPAGGKPDGQMYLVNHTLNVNVFGIFLPDRFKAGRTNAAVGQGSIGAQVDLCNSIYHRKPNVVLLDFITEGDVLKAERTMNGL.

A signal peptide spans 1–24 (MSMSTLRHFLWLGALLLATIQVSA). Residues 25-189 (LPTAQDLICN…RLIVFVDSKA (165 aa)) enclose the PI-PLC X-box domain. Catalysis depends on residues His53 and His97. N-linked (GlcNAc...) asparagine glycosylation is present at Asn237.

Its subcellular location is the secreted. The protein is PI-PLC X domain-containing protein 1 of Arthroderma benhamiae (strain ATCC MYA-4681 / CBS 112371) (Trichophyton mentagrophytes).